A 586-amino-acid chain; its full sequence is A-type ATP synthase subunit A (586 aa).

ATP is bound at residue 232 to 239 (GPFGSGKT).

It belongs to the ATPase alpha/beta chains family. Has multiple subunits with at least A(3), B(3), C, D, E, F, H, I and proteolipid K(x).

It is found in the cell membrane. It catalyses the reaction ATP + H2O + 4 H(+)(in) = ADP + phosphate + 5 H(+)(out). Its function is as follows. Component of the A-type ATP synthase that produces ATP from ADP in the presence of a proton gradient across the membrane. The A chain is the catalytic subunit. The polypeptide is A-type ATP synthase subunit A (Methanococcus maripaludis (strain DSM 14266 / JCM 13030 / NBRC 101832 / S2 / LL)).